The sequence spans 64 residues: Conotoxin Pn-B01122 (64 aa).

Residues M1 to A22 form the signal peptide. Residues R23–N48 constitute a propeptide that is removed on maturation.

This sequence belongs to the conotoxin T superfamily. In terms of processing, contains 2 disulfide bonds that can be either 'C1-C3, C2-C4' or 'C1-C4, C2-C3', since these disulfide connectivities have been observed for conotoxins with cysteine framework V (for examples, see AC P0DQQ7 and AC P81755). As to expression, expressed by the venom duct.

It localises to the secreted. In Conus pennaceus (Feathered cone), this protein is Conotoxin Pn-B01122.